A 549-amino-acid chain; its full sequence is Beta-hexosaminidase Amuc_0868 (549 aa).

The N-terminal stretch at 1-28 (MISKCTFSATVFSLFSLCWGAPSSPVLE) is a signal peptide. A substrate-binding site is contributed by R161. Catalysis depends on charge relay system residues D190 and H260. D326 provides a ligand contact to substrate. Residue E327 is the Charge relay system of the active site. Residues W393, 420-422 (YFD), and 474-476 (WTE) contribute to the substrate site. Positions 526–549 (GVNYKRPDNGAPAQPKAVITRERR) are disordered.

Belongs to the glycosyl hydrolase 20 family.

It catalyses the reaction Hydrolysis of terminal non-reducing N-acetyl-D-hexosamine residues in N-acetyl-beta-D-hexosaminides.. Inhibited strongly by Cu(2+), Zn(2+), Cd(2+) and Ni(2+) ions. No effect on activity with Na(+), Li(+), K(+), Ca(2+), Mg(2+) or Mn(2+) ions. Potentially capable of cleaving the specific glycoside linkages in the process of mucin degradation in human intestinal tract. Hydrolyzes chromogenic substrates pNP-beta-GlcNAc with high activity and pNP-beta-GalNAc to a lesser extent, but not pNP-beta-glucose or pNP-beta-galactose. The protein is Beta-hexosaminidase Amuc_0868 of Akkermansia muciniphila (strain ATCC BAA-835 / DSM 22959 / JCM 33894 / BCRC 81048 / CCUG 64013 / CIP 107961 / Muc).